The primary structure comprises 245 residues: PF03932 family protein CutC (245 aa).

This sequence belongs to the CutC family.

It localises to the cytoplasm. The polypeptide is PF03932 family protein CutC (Sinorhizobium medicae (strain WSM419) (Ensifer medicae)).